The sequence spans 936 residues: F-box protein dre-1 (936 aa).

The interval 1–67 (MSSSSSPFFH…GSSEADNPTL (67 aa)) is disordered. A compositionally biased stretch (low complexity) spans 22–36 (QQSPSYSQNSNSPSQ). The segment covering 48–63 (GSTSMRYSPSGSSEAD) has biased composition (polar residues). An F-box domain is found at 159 to 205 (QDHINRLPEELLLKVFSFLPDKSLLACSSVSYRFNQISNSHEVWKEL). 18 PbH1 repeats span residues 405–427 (SAAP…YITD), 428–450 (NATG…WVKN), 451–473 (HANP…FTFE), 474–496 (HGQG…EVKN), 497–519 (SANP…YVHE), 520–542 (RGRG…WITS), 543–565 (HSDP…YIFG), 566–588 (EGRG…QIRS), 589–611 (QSDP…YVHE), 612–634 (KGRG…WVTT), 635–657 (GSSP…YFYD), 658–680 (QGHG…QIRT), 681–703 (GSNP…LVYN), 704–726 (GGKG…WIKT), 727–749 (DSEP…CIFN), 750–772 (RGKG…LIST), 773–795 (ESNP…EITN), and 796–818 (GATA…CVAT). A UBR-type zinc finger spans residues 843 to 914 (GLCLFKVSSN…LERHCHLQNV (72 aa)).

As to quaternary structure, component of a SCF ubiquitin ligase complex. Interacts (via F-box) with skr-1. Interacts with blmp-1; the interaction targets blmp-1 for proteasomal degradation. Interacts with ced-9; the interaction inhibits ced-9 activity, either directly or indirectly. As to expression, in mid-embryogenesis, expression is most prominent in epidermal and intestinal cells. By the 1.5-fold stage of embryogenesis, expression is additionally detected in neurons and other cells. During larval and adult stages, highest expression is seen in epidermal seam cells and hypodermis. In larvae, strongly expressed in the P epidermal blast cells and descendents that give rise to the vulva and weakly expressed in the somatic gonad, including the gonadoblasts, the anchor cell and the distal tip cells. Some weak expression also seen in adult spermatheca and uterus. In the musculature, expressed in the pharynx, anal depressor, sex muscles, and body wall muscles. Detected in neurons of the head, tail, ventral cord and periphery. Also expressed in the embryonic tail spike cell.

It is found in the nucleus. The protein resides in the cytoplasm. The protein operates within protein modification; protein ubiquitination. Its function is as follows. Substrate recognition component of a SCF (SKP1-CUL1-F-box protein) E3 ubiquitin-protein ligase complex which mediates the ubiquitination and subsequent proteasomal degradation of target proteins including blmp-1. Promotes ubiquitination of snail family proteins ces-1, scrt-1 and snai-1. Heterochronic protein which is required for the timing of gonad development and epidermal seam cell differentiation. Regulates tail-spike cell death through inhibition of the apoptosis regulator ced-9. This chain is F-box protein dre-1, found in Caenorhabditis elegans.